Reading from the N-terminus, the 606-residue chain is tRNA 5-methylaminomethyl-2-thiouridine biosynthesis bifunctional protein MnmC (606 aa).

Positions 1–237 (MNSNSSVQFN…KRDMLCGHYL (237 aa)) are tRNA (mnm(5)s(2)U34)-methyltransferase. The segment at 254–606 (IGGGISAACS…RRISVSRFKG (353 aa)) is FAD-dependent cmnm(5)s(2)U34 oxidoreductase.

This sequence in the N-terminal section; belongs to the methyltransferase superfamily. tRNA (mnm(5)s(2)U34)-methyltransferase family. In the C-terminal section; belongs to the DAO family. FAD is required as a cofactor.

The protein localises to the cytoplasm. It catalyses the reaction 5-aminomethyl-2-thiouridine(34) in tRNA + S-adenosyl-L-methionine = 5-methylaminomethyl-2-thiouridine(34) in tRNA + S-adenosyl-L-homocysteine + H(+). Catalyzes the last two steps in the biosynthesis of 5-methylaminomethyl-2-thiouridine (mnm(5)s(2)U) at the wobble position (U34) in tRNA. Catalyzes the FAD-dependent demodification of cmnm(5)s(2)U34 to nm(5)s(2)U34, followed by the transfer of a methyl group from S-adenosyl-L-methionine to nm(5)s(2)U34, to form mnm(5)s(2)U34. This Idiomarina loihiensis (strain ATCC BAA-735 / DSM 15497 / L2-TR) protein is tRNA 5-methylaminomethyl-2-thiouridine biosynthesis bifunctional protein MnmC.